A 429-amino-acid polypeptide reads, in one-letter code: Enolase (429 aa).

Position 162 (Q162) interacts with (2R)-2-phosphoglycerate. The active-site Proton donor is the E204. Residues D241, E283, and D310 each contribute to the Mg(2+) site. Residues K335, R364, S365, and K386 each coordinate (2R)-2-phosphoglycerate. The active-site Proton acceptor is K335.

The protein belongs to the enolase family. Mg(2+) is required as a cofactor.

It is found in the cytoplasm. The protein localises to the secreted. Its subcellular location is the cell surface. It carries out the reaction (2R)-2-phosphoglycerate = phosphoenolpyruvate + H2O. The protein operates within carbohydrate degradation; glycolysis; pyruvate from D-glyceraldehyde 3-phosphate: step 4/5. In terms of biological role, catalyzes the reversible conversion of 2-phosphoglycerate (2-PG) into phosphoenolpyruvate (PEP). It is essential for the degradation of carbohydrates via glycolysis. This chain is Enolase, found in Mycolicibacterium gilvum (strain PYR-GCK) (Mycobacterium gilvum (strain PYR-GCK)).